A 235-amino-acid chain; its full sequence is MSVHIEAKQGEIAESILLPGDPLRAKYIAETFLEDVTCYNNVRGMLGFTGTYKGKRVSVQGTGMGVPSISIYVNELIQSYGVKNLIRVGTCGAIQKDVKVRDVIIAMTACTDSNMNRLTFPGFDFAPTANFDLLKKAYDAGTEKGLHVRVGNVLTADVFYRESMDMVKKLGDYGVLAVEMETTALYTLAAKYGVNALSVLTVSDHIFTGEETTSEERQTTFNEMIEIALDAAIQQ.

H4 is an a purine D-ribonucleoside binding site. Phosphate is bound by residues G20, R24, R43, and 87-90 (RVGT). A purine D-ribonucleoside-binding positions include E162, 179 to 181 (EME), and 203 to 204 (SD). The Proton donor role is filled by D204.

It belongs to the PNP/UDP phosphorylase family. In terms of assembly, homohexamer; trimer of homodimers.

The catalysed reaction is a purine D-ribonucleoside + phosphate = a purine nucleobase + alpha-D-ribose 1-phosphate. It catalyses the reaction a purine 2'-deoxy-D-ribonucleoside + phosphate = a purine nucleobase + 2-deoxy-alpha-D-ribose 1-phosphate. Catalyzes the reversible phosphorolytic breakdown of the N-glycosidic bond in the beta-(deoxy)ribonucleoside molecules, with the formation of the corresponding free purine bases and pentose-1-phosphate. This Bacillus cereus (strain B4264) protein is Purine nucleoside phosphorylase DeoD-type.